A 137-amino-acid polypeptide reads, in one-letter code: Proofreading thioesterase EntH (137 aa).

E63 acts as the Nucleophile or proton acceptor in catalysis.

This sequence belongs to the thioesterase PaaI family. Homotetramer. Dimer of dimers. Interacts specifically with the aryl carrier protein (ArCP) domain of EntB.

The protein localises to the cytoplasm. Its pathway is siderophore biosynthesis; enterobactin biosynthesis. Required for optimal enterobactin synthesis. Acts as a proofreading enzyme that prevents EntB misacylation by hydrolyzing the thioester bound existing between EntB and wrongly charged molecules. The protein is Proofreading thioesterase EntH of Salmonella paratyphi A (strain AKU_12601).